Reading from the N-terminus, the 166-residue chain is MSKSICSTGLRWLWVVVAVLIIDLGSKFLILQNFALGETVPLFPSLNLHYARNYGAAFSFLADSGGWQRWFFSGIAIGICVVLTVLMYRSKATQKLNNIAYALIIGGALGNLFDRLWHGFVVDMIDFYVGDWHFATFNLADSAICIGAALIVLEGFLPKPTVKEQA.

The next 3 helical transmembrane spans lie at 12-32, 70-90, and 102-122; these read WLWV…LILQ, WFFS…MYRS, and ALII…GFVV. Catalysis depends on residues Asp-123 and Asp-141. The helical transmembrane segment at 137 to 157 threads the bilayer; the sequence is FNLADSAICIGAALIVLEGFL.

Belongs to the peptidase A8 family.

The protein resides in the cell inner membrane. The enzyme catalyses Release of signal peptides from bacterial membrane prolipoproteins. Hydrolyzes -Xaa-Yaa-Zaa-|-(S,diacylglyceryl)Cys-, in which Xaa is hydrophobic (preferably Leu), and Yaa (Ala or Ser) and Zaa (Gly or Ala) have small, neutral side chains.. It functions in the pathway protein modification; lipoprotein biosynthesis (signal peptide cleavage). In terms of biological role, this protein specifically catalyzes the removal of signal peptides from prolipoproteins. In Klebsiella pneumoniae subsp. pneumoniae (strain ATCC 700721 / MGH 78578), this protein is Lipoprotein signal peptidase.